The sequence spans 269 residues: tRNA pseudouridine synthase A (269 aa).

Asp-51 (nucleophile) is an active-site residue. Tyr-109 is a substrate binding site.

Belongs to the tRNA pseudouridine synthase TruA family. As to quaternary structure, homodimer.

The catalysed reaction is uridine(38/39/40) in tRNA = pseudouridine(38/39/40) in tRNA. Formation of pseudouridine at positions 38, 39 and 40 in the anticodon stem and loop of transfer RNAs. This chain is tRNA pseudouridine synthase A, found in Haemophilus influenzae (strain ATCC 51907 / DSM 11121 / KW20 / Rd).